The primary structure comprises 404 residues: Tryptophan synthase beta chain (404 aa).

N6-(pyridoxal phosphate)lysine is present on Lys-98.

It belongs to the TrpB family. Tetramer of two alpha and two beta chains. It depends on pyridoxal 5'-phosphate as a cofactor.

It catalyses the reaction (1S,2R)-1-C-(indol-3-yl)glycerol 3-phosphate + L-serine = D-glyceraldehyde 3-phosphate + L-tryptophan + H2O. Its pathway is amino-acid biosynthesis; L-tryptophan biosynthesis; L-tryptophan from chorismate: step 5/5. In terms of biological role, the beta subunit is responsible for the synthesis of L-tryptophan from indole and L-serine. The chain is Tryptophan synthase beta chain from Rhodopseudomonas palustris (strain HaA2).